Reading from the N-terminus, the 477-residue chain is Ribulose bisphosphate carboxylase large chain (477 aa).

The propeptide occupies 1–2 (MS). N-acetylproline is present on Pro-3. N6,N6,N6-trimethyllysine is present on Lys-14. Positions 123 and 173 each coordinate substrate. Lys-175 (proton acceptor) is an active-site residue. Lys-177 provides a ligand contact to substrate. Mg(2+) contacts are provided by Lys-201, Asp-203, and Glu-204. The residue at position 201 (Lys-201) is an N6-carboxylysine. His-294 serves as the catalytic Proton acceptor. Substrate contacts are provided by Arg-295, His-327, and Ser-379.

It belongs to the RuBisCO large chain family. Type I subfamily. As to quaternary structure, heterohexadecamer of 8 large chains and 8 small chains; disulfide-linked. The disulfide link is formed within the large subunit homodimers. Mg(2+) serves as cofactor. In terms of processing, the disulfide bond which can form in the large chain dimeric partners within the hexadecamer appears to be associated with oxidative stress and protein turnover.

It localises to the plastid. It is found in the chloroplast. The catalysed reaction is 2 (2R)-3-phosphoglycerate + 2 H(+) = D-ribulose 1,5-bisphosphate + CO2 + H2O. It carries out the reaction D-ribulose 1,5-bisphosphate + O2 = 2-phosphoglycolate + (2R)-3-phosphoglycerate + 2 H(+). In terms of biological role, ruBisCO catalyzes two reactions: the carboxylation of D-ribulose 1,5-bisphosphate, the primary event in carbon dioxide fixation, as well as the oxidative fragmentation of the pentose substrate in the photorespiration process. Both reactions occur simultaneously and in competition at the same active site. This chain is Ribulose bisphosphate carboxylase large chain, found in Nicotiana otophora (Tobacco).